The sequence spans 344 residues: Adenine deaminase (344 aa).

Zn(2+) contacts are provided by H24, H26, and H204. E207 (proton donor) is an active-site residue. Zn(2+) is bound at residue D285. Substrate is bound at residue D286.

This sequence belongs to the metallo-dependent hydrolases superfamily. Adenosine and AMP deaminases family. Adenine deaminase type 2 subfamily. The cofactor is Zn(2+).

The enzyme catalyses adenine + H2O + H(+) = hypoxanthine + NH4(+). In terms of biological role, catalyzes the hydrolytic deamination of adenine to hypoxanthine. Plays an important role in the purine salvage pathway and in nitrogen catabolism. The chain is Adenine deaminase from Caulobacter vibrioides (strain ATCC 19089 / CIP 103742 / CB 15) (Caulobacter crescentus).